The primary structure comprises 291 residues: tRNA dimethylallyltransferase (291 aa).

11 to 18 contacts ATP; it reads GPTASGKS. Substrate is bound at residue 13 to 18; it reads TASGKS. The segment at 42–45 is interaction with substrate tRNA; sequence DSMQ.

This sequence belongs to the IPP transferase family. In terms of assembly, monomer. Mg(2+) serves as cofactor.

The catalysed reaction is adenosine(37) in tRNA + dimethylallyl diphosphate = N(6)-dimethylallyladenosine(37) in tRNA + diphosphate. Its function is as follows. Catalyzes the transfer of a dimethylallyl group onto the adenine at position 37 in tRNAs that read codons beginning with uridine, leading to the formation of N6-(dimethylallyl)adenosine (i(6)A). The sequence is that of tRNA dimethylallyltransferase from Rubrobacter xylanophilus (strain DSM 9941 / JCM 11954 / NBRC 16129 / PRD-1).